Consider the following 88-residue polypeptide: ATPase inhibitor mai-1, mitochondrial (88 aa).

Positions 1–18 (MSGSGSGSGAGHGGGSGG) are enriched in gly residues. The interval 1-41 (MSGSGSGSGAGHGGGSGGSIREAGGSLGMMGATREEEYFRR) is disordered. Residues 39-87 (FRRQQKDQLDNLKKKLEADMTQSQQEIRDHEKVLEQHQQRLKEIEKGHG) adopt a coiled-coil conformation.

The protein belongs to the ATPase inhibitor family. Does not seem to include a transit peptide.

The protein resides in the mitochondrion. In terms of biological role, thought to be a regulatory component of the ATP-synthesizing complex in the mitochondria. This Caenorhabditis elegans protein is ATPase inhibitor mai-1, mitochondrial (mai-1).